The primary structure comprises 364 residues: Pectinesterase 1 (364 aa).

The first 22 residues, 1–22 (MSCIAVEAVLLGILLYIPIVLS), serve as a signal peptide directing secretion. An N-linked (GlcNAc...) asparagine glycan is attached at N103. D220 is a catalytic residue.

Belongs to the pectinesterase family. Glycosylated. Expressed in pollen.

It localises to the secreted. The catalysed reaction is [(1-&gt;4)-alpha-D-galacturonosyl methyl ester](n) + n H2O = [(1-&gt;4)-alpha-D-galacturonosyl](n) + n methanol + n H(+). The protein operates within glycan metabolism; pectin degradation; 2-dehydro-3-deoxy-D-gluconate from pectin: step 1/5. In terms of biological role, catalyzes the demethylesterification of homogalacturonan components of pectin. May be involved in pollen tube development. This chain is Pectinesterase 1, found in Olea europaea (Common olive).